Here is a 205-residue protein sequence, read N- to C-terminus: Methyltransferase-like 26 B (205 aa).

This sequence belongs to the UPF0585 family.

The chain is Methyltransferase-like 26 B from Danio rerio (Zebrafish).